Consider the following 363-residue polypeptide: Chorismate synthase (363 aa).

Residues arginine 48 and arginine 54 each coordinate NADP(+). Residues 125 to 127 (RSS), 237 to 238 (NA), glycine 277, 292 to 296 (KPTSS), and arginine 318 contribute to the FMN site.

Belongs to the chorismate synthase family. In terms of assembly, homotetramer. It depends on FMNH2 as a cofactor.

It carries out the reaction 5-O-(1-carboxyvinyl)-3-phosphoshikimate = chorismate + phosphate. Its pathway is metabolic intermediate biosynthesis; chorismate biosynthesis; chorismate from D-erythrose 4-phosphate and phosphoenolpyruvate: step 7/7. Functionally, catalyzes the anti-1,4-elimination of the C-3 phosphate and the C-6 proR hydrogen from 5-enolpyruvylshikimate-3-phosphate (EPSP) to yield chorismate, which is the branch point compound that serves as the starting substrate for the three terminal pathways of aromatic amino acid biosynthesis. This reaction introduces a second double bond into the aromatic ring system. This is Chorismate synthase from Pseudomonas paraeruginosa (strain DSM 24068 / PA7) (Pseudomonas aeruginosa (strain PA7)).